The following is a 247-amino-acid chain: V-type proton ATPase subunit D (247 aa).

This sequence belongs to the V-ATPase D subunit family. As to quaternary structure, V-ATPase is a heteromultimeric enzyme made up of two complexes: the ATP-hydrolytic V1 complex and the proton translocation V0 complex. The V1 complex consists of three catalytic AB heterodimers that form a heterohexamer, three peripheral stalks each consisting of EG heterodimers, one central rotor including subunits D and F, and the regulatory subunits C and H. The proton translocation complex V0 consists of the proton transport subunit a, a ring of proteolipid subunits c9c'', rotary subunit d, subunits e and f, and the accessory subunits ATP6AP1/Ac45 and ATP6AP2/PRR. Interacts with SNX10.

Its subcellular location is the membrane. It localises to the cytoplasmic vesicle. The protein localises to the clathrin-coated vesicle membrane. The protein resides in the cytoplasm. It is found in the cytoskeleton. Its subcellular location is the microtubule organizing center. It localises to the centrosome. The protein localises to the cell projection. The protein resides in the cilium. Functionally, subunit of the V1 complex of vacuolar(H+)-ATPase (V-ATPase), a multisubunit enzyme composed of a peripheral complex (V1) that hydrolyzes ATP and a membrane integral complex (V0) that translocates protons. V-ATPase is responsible for acidifying and maintaining the pH of intracellular compartments and in some cell types, is targeted to the plasma membrane, where it is responsible for acidifying the extracellular environment. May play a role in cilium biogenesis through regulation of the transport and the localization of proteins to the cilium. This is V-type proton ATPase subunit D (ATP6V1D) from Oryctolagus cuniculus (Rabbit).